The chain runs to 473 residues: Aspartyl/glutamyl-tRNA(Asn/Gln) amidotransferase subunit B (473 aa).

Belongs to the GatB/GatE family. GatB subfamily. In terms of assembly, heterotrimer of A, B and C subunits.

The catalysed reaction is L-glutamyl-tRNA(Gln) + L-glutamine + ATP + H2O = L-glutaminyl-tRNA(Gln) + L-glutamate + ADP + phosphate + H(+). It catalyses the reaction L-aspartyl-tRNA(Asn) + L-glutamine + ATP + H2O = L-asparaginyl-tRNA(Asn) + L-glutamate + ADP + phosphate + 2 H(+). Allows the formation of correctly charged Asn-tRNA(Asn) or Gln-tRNA(Gln) through the transamidation of misacylated Asp-tRNA(Asn) or Glu-tRNA(Gln) in organisms which lack either or both of asparaginyl-tRNA or glutaminyl-tRNA synthetases. The reaction takes place in the presence of glutamine and ATP through an activated phospho-Asp-tRNA(Asn) or phospho-Glu-tRNA(Gln). The polypeptide is Aspartyl/glutamyl-tRNA(Asn/Gln) amidotransferase subunit B (Francisella tularensis subsp. tularensis (strain FSC 198)).